The primary structure comprises 93 residues: Small ribosomal subunit protein uS19 (93 aa).

Belongs to the universal ribosomal protein uS19 family.

Protein S19 forms a complex with S13 that binds strongly to the 16S ribosomal RNA. In Mycobacterium leprae (strain TN), this protein is Small ribosomal subunit protein uS19 (rpsS).